The sequence spans 172 residues: MANKEATVAELENLFDSSTAVLLTEYRGLTVAQLKTLRTSISEHATYAVVKNTLTKIAANKKGISSFDEELVGPSAIAFVHGDPVAVAKSLRDFAKANPLLVVKSGYFDGNPLTAEEVGKLADLESREVLLAKLAGAFKASLFGAAYLFNAPLSQAVRTVDALREKQESAAE.

This sequence belongs to the universal ribosomal protein uL10 family. As to quaternary structure, part of the ribosomal stalk of the 50S ribosomal subunit. The N-terminus interacts with L11 and the large rRNA to form the base of the stalk. The C-terminus forms an elongated spine to which L12 dimers bind in a sequential fashion forming a multimeric L10(L12)X complex.

In terms of biological role, forms part of the ribosomal stalk, playing a central role in the interaction of the ribosome with GTP-bound translation factors. The chain is Large ribosomal subunit protein uL10 from Leifsonia xyli subsp. xyli (strain CTCB07).